A 322-amino-acid polypeptide reads, in one-letter code: F-box protein At2g16300 (322 aa).

Positions 2 to 50 (ADWSLLPNDLLELIVGHLETSFEIVLFRSVCSSWRSVVPPQDQSRCLSI) constitute an F-box domain.

This Arabidopsis thaliana (Mouse-ear cress) protein is F-box protein At2g16300.